The sequence spans 863 residues: Protein translocase subunit SecA (863 aa).

Residues Gln88, 106–110, and Asp496 each bind ATP; that span reads GEGKT. The disordered stretch occupies residues 818-842; the sequence is EVKTEPVITKKKPARNEPCPCGSGK. 4 residues coordinate Zn(2+): Cys836, Cys838, Cys847, and Cys848.

Belongs to the SecA family. Monomer and homodimer. Part of the essential Sec protein translocation apparatus which comprises SecA, SecYEG and auxiliary proteins SecDF-YajC and YidC. Zn(2+) serves as cofactor.

The protein localises to the cell inner membrane. It is found in the cytoplasm. The catalysed reaction is ATP + H2O + cellular proteinSide 1 = ADP + phosphate + cellular proteinSide 2.. In terms of biological role, part of the Sec protein translocase complex. Interacts with the SecYEG preprotein conducting channel. Has a central role in coupling the hydrolysis of ATP to the transfer of proteins into and across the cell membrane, serving as an ATP-driven molecular motor driving the stepwise translocation of polypeptide chains across the membrane. This chain is Protein translocase subunit SecA, found in Nitratiruptor sp. (strain SB155-2).